Consider the following 241-residue polypeptide: uncharacterized protein (241 aa).

Positions 32–86 (LKKWRNLFNIQQIELAKYLNVSPSVISDYEVGRRKNPGVNIIKKYVLALIEIDKE) constitute an HTH cro/C1-type domain. The H-T-H motif DNA-binding region spans 43 to 62 (QIELAKYLNVSPSVISDYEV).

This is an uncharacterized protein from Methanocaldococcus jannaschii (strain ATCC 43067 / DSM 2661 / JAL-1 / JCM 10045 / NBRC 100440) (Methanococcus jannaschii).